The primary structure comprises 83 residues: Small cysteine-rich protein 3 (83 aa).

Residues 1–21 (MGVKLNICLLLLLVAIISSQG) form the signal peptide. A propeptide spanning residues 22-39 (FNLRKKEDSKDEKPFGNY) is cleaved from the precursor. Over residues 25–35 (RKKEDSKDEKP) the composition is skewed to basic and acidic residues. A disordered region spans residues 25–44 (RKKEDSKDEKPFGNYRRGSP).

The protein belongs to the Cnidaria small cysteine-rich protein (SCRiP) family. alpha subfamily. Contains 4 disulfide bonds.

Its subcellular location is the secreted. The protein resides in the nematocyst. In terms of biological role, this recombinant protein induces severe neurotoxicity on zebrafish larvae (Danio rerio) at a concentration of 230 mg/ml, but does not show toxicity when injected in blowfly larvae (Sarcophaga falculata). All fish incubated with this protein died within 16 hours of exposure. Has also been claimed to be implied in calcification, but this function seems improbable. The sequence is that of Small cysteine-rich protein 3 from Acropora millepora (Staghorn coral).